Here is a 388-residue protein sequence, read N- to C-terminus: Succinate--CoA ligase [ADP-forming] subunit beta (388 aa).

One can recognise an ATP-grasp domain in the interval 9–244; that stretch reads KEILRKYNVP…LDEEDANEIE (236 aa). Residues Lys46, 53 to 55, Glu99, Ala102, and Glu107 each bind ATP; that span reads GRG. Mg(2+)-binding residues include Asn199 and Asp213. Substrate-binding positions include Asn264 and 321–323; that span reads GIM.

It belongs to the succinate/malate CoA ligase beta subunit family. In terms of assembly, heterotetramer of two alpha and two beta subunits. It depends on Mg(2+) as a cofactor.

The enzyme catalyses succinate + ATP + CoA = succinyl-CoA + ADP + phosphate. The catalysed reaction is GTP + succinate + CoA = succinyl-CoA + GDP + phosphate. It participates in carbohydrate metabolism; tricarboxylic acid cycle; succinate from succinyl-CoA (ligase route): step 1/1. In terms of biological role, succinyl-CoA synthetase functions in the citric acid cycle (TCA), coupling the hydrolysis of succinyl-CoA to the synthesis of either ATP or GTP and thus represents the only step of substrate-level phosphorylation in the TCA. The beta subunit provides nucleotide specificity of the enzyme and binds the substrate succinate, while the binding sites for coenzyme A and phosphate are found in the alpha subunit. This Cupriavidus taiwanensis (strain DSM 17343 / BCRC 17206 / CCUG 44338 / CIP 107171 / LMG 19424 / R1) (Ralstonia taiwanensis (strain LMG 19424)) protein is Succinate--CoA ligase [ADP-forming] subunit beta.